The primary structure comprises 271 residues: RELT-like protein 1 (271 aa).

Positions 1-23 are cleaved as a signal peptide; the sequence is MAPRGLPGSAVLAAAVFVGGAVS. The Extracellular segment spans residues 24–57; the sequence is SPLVRSDHSGSHPLPSKTETTPSPTNNNGNGHPE. Positions 27 to 52 are disordered; that stretch reads VRSDHSGSHPLPSKTETTPSPTNNNG. Residues 36–52 show a composition bias toward low complexity; it reads PLPSKTETTPSPTNNNG. Residues 58-78 traverse the membrane as a helical segment; sequence YIAYALVPVFFVMGLFGVLIC. The Cytoplasmic segment spans residues 79–271; the sequence is HLLKKKGYRC…PVKRQQSDSE (193 aa). Phosphoserine occurs at positions 109 and 114. Disordered stretches follow at residues 144–168 and 231–271; these read CDPE…LSPG and TKVE…SDSE. Positions 155–165 are enriched in pro residues; it reads PGSPPVSPGPL. Basic and acidic residues predominate over residues 231–244; sequence TKVEPKSNQKERRS. A phosphoserine mark is found at serine 244 and serine 247.

This sequence belongs to the RELT family. Interacts with RELT, RELL2, OXSR1 and PLSCR1.

It localises to the cell membrane. Induces activation of MAPK14/p38 cascade, when overexpressed. Induces apoptosis, when overexpressed. The polypeptide is RELT-like protein 1 (RELL1) (Bos taurus (Bovine)).